We begin with the raw amino-acid sequence, 967 residues long: LRR receptor-like serine/threonine-protein kinase ERL2 (967 aa).

The signal sequence occupies residues M1–P27. Topologically, residues M28–R585 are extracellular. N-linked (GlcNAc...) asparagine glycosylation is found at N70 and N79. LRR repeat units follow at residues N74–M97, N98–C120, S122–K145, Q146–T166, N170–N192, V194–L216, G218–C240, S242–I261, Q265–M287, A289–L311, F313–M335, R337–L359, Q361–S382, A385–N406, S409–I431, N433–E456, H457–L479, S481–L503, N505–C527, and S529–F550. N228 and N239 each carry an N-linked (GlcNAc...) asparagine glycan. N-linked (GlcNAc...) asparagine glycosylation is found at N310 and N334. N379 carries an N-linked (GlcNAc...) asparagine glycan. N-linked (GlcNAc...) asparagine glycans are attached at residues N414, N443, N462, and N469. N534, N539, and N549 each carry an N-linked (GlcNAc...) asparagine glycan. Residues V586 to V606 form a helical membrane-spanning segment. Over Y607 to L967 the chain is Cytoplasmic. 2 positions are modified to phosphothreonine: T640 and T648. The region spanning L651–V921 is the Protein kinase domain. ATP-binding positions include I657–V665 and K679. 2 positions are modified to phosphotyrosine: Y724 and Y763. D776 functions as the Proton acceptor in the catalytic mechanism. Y818 carries the post-translational modification Phosphotyrosine. T826 carries the post-translational modification Phosphothreonine. A disordered region spans residues V921–F955. Over residues Q936 to S946 the composition is skewed to basic and acidic residues.

This sequence belongs to the protein kinase superfamily. Ser/Thr protein kinase family. As to expression, mostly expressed in developing organs, including bud clusters, flowers, siliques and young rosettes. Also detected in mature aboveground organs, such as leaves, stems and pedicels, but barely in roots.

It is found in the membrane. It carries out the reaction L-seryl-[protein] + ATP = O-phospho-L-seryl-[protein] + ADP + H(+). The enzyme catalyses L-threonyl-[protein] + ATP = O-phospho-L-threonyl-[protein] + ADP + H(+). Functionally, receptor kinase that regulates inflorescence architecture and organ shape as well as stomatal patterning, including density and clustering, together with ERL1 and ER. The polypeptide is LRR receptor-like serine/threonine-protein kinase ERL2 (ERL2) (Arabidopsis thaliana (Mouse-ear cress)).